A 2896-amino-acid polypeptide reads, in one-letter code: Protein PRRC2C (2896 aa).

N6-acetyllysine is present on Lys-27. Residues 28-212 are disordered; the sequence is GKSLETQKTT…STAGTSEQND (185 aa). The segment covering 88-97 has biased composition (basic and acidic residues); sequence QEQHEEEKTP. Over residues 105–119 the composition is skewed to low complexity; sequence KPGVAAPPEVAPAPK. The span at 134–144 shows a compositional bias: polar residues; the sequence is QVNSQFQQEFP. Positions 151–160 are enriched in basic and acidic residues; that stretch reads DQEKKEKETN. Ser-187 and Ser-191 each carry phosphoserine. A compositionally biased stretch (polar residues) spans 201-211; the sequence is DESTAGTSEQN. At Arg-242 the chain carries Asymmetric dimethylarginine; alternate. At Arg-242 the chain carries Omega-N-methylarginine; alternate. Asymmetric dimethylarginine is present on residues Arg-255 and Arg-266. Disordered stretches follow at residues 264–729 and 750–788; these read PMRF…QHLA and SGRP…SFEH. An omega-N-methylarginine mark is found at Arg-279 and Arg-281. The segment covering 301–310 has biased composition (basic and acidic residues); that stretch reads ELKELDKFDN. Phosphoserine is present on Ser-335. The segment covering 341–358 has biased composition (polar residues); sequence GSNSPKENNSEDQGSKAS. Positions 359–368 are enriched in basic and acidic residues; that stretch reads ENNENKKETD. Over residues 370–381 the composition is skewed to polar residues; the sequence is VSNTKSSSQIPA. At Lys-392 the chain carries N6-acetyllysine. 2 positions are modified to phosphoserine: Ser-395 and Ser-500. Over residues 395 to 405 the composition is skewed to polar residues; it reads SFNQERGTSSH. Residues 465-648 show a composition bias toward basic and acidic residues; that stretch reads RREEEERRME…EATPVVHETE (184 aa). The span at 676 to 708 shows a compositional bias: low complexity; that stretch reads QRQQEQMKQQQWQQQQQQGVLPQTVPSQPSSST. Pro residues predominate over residues 759-769; that stretch reads PIHPGMIPPKP. Phosphoserine occurs at positions 779, 785, and 801. Residues 804–1118 form a disordered region; sequence RMLWGSDPYP…PVSTVQVEPA (315 aa). Composition is skewed to basic and acidic residues over residues 825 to 836, 852 to 867, and 878 to 888; these read ATEEPEDVRSEA, NQLE…RESS, and SVEDVRPHHTD. A phosphoserine mark is found at Ser-867, Ser-878, Ser-920, and Ser-929. 3 stretches are compositionally biased toward basic and acidic residues: residues 954–993, 1000–1010, and 1020–1058; these read IDSK…ETRW, NRREEVNDRPV, and VLRD…KKDL. Residues 1020-1046 are a coiled coil; that stretch reads VLRDMKEEREQRKEKEGEKAEKVTEKV. Over residues 1059-1081 the composition is skewed to pro residues; sequence PPPPPPPQPPAPIQPQSVPPPIQ. Residues 1089-1100 are compositionally biased toward polar residues; sequence STETATLAQKPS. Lys-1133 is covalently cross-linked (Glycyl lysine isopeptide (Lys-Gly) (interchain with G-Cter in SUMO2)). Basic and acidic residues-rich tracts occupy residues 1143-1163, 1170-1180, 1214-1230, and 1237-1248; these read SKDL…KKES, YWKEARERDWF, HTRD…RAEH, and RQREESETRSES. 8 disordered regions span residues 1143–1647, 1670–1785, 1905–1991, 2005–2164, 2218–2238, 2257–2290, 2317–2341, and 2668–2701; these read SKDL…DALS, EDPQ…SAPV, APAS…TAEL, ISKK…VSEM, LPNT…SLTS, WENS…GPST, GAGT…NICK, and DIKP…QSSK. A phosphoserine mark is found at Ser-1242, Ser-1246, Ser-1248, Ser-1249, and Ser-1263. 4 stretches are compositionally biased toward basic and acidic residues: residues 1261 to 1297, 1305 to 1330, 1381 to 1418, and 1429 to 1446; these read RGSE…ENKK, FKPD…DKAK, EVPK…PARE, and PRQD…REAA. 2 positions are modified to phosphothreonine: Thr-1265 and Thr-1267. Polar residues-rich tracts occupy residues 1457 to 1469 and 1477 to 1491; these read TNGT…QEPV and GNKT…SSDQ. A compositionally biased stretch (basic and acidic residues) spans 1505–1517; it reads FNERRERDEKKNA. Ser-1544 carries the phosphoserine modification. Basic and acidic residues-rich tracts occupy residues 1620–1634 and 1692–1704; these read NSKD…DPKP and RLQD…KEEQ. Residues 1682 to 1717 adopt a coiled-coil conformation; sequence TEVVSKKQQKRLQDEERRKKEEQVIQVWNKKNANEK. Over residues 1742-1785 the composition is skewed to low complexity; it reads SSASVPPLASAPLPPSTSASVPASTSAPLPATLTPVPASTSAPV. Over residues 1913–1929 the composition is skewed to pro residues; sequence APAPTPVSAPNPAPPAP. Residues 1943-1952 are compositionally biased toward low complexity; it reads PLQTTSQSSK. Residue Thr-1965 is modified to Phosphothreonine. Polar residues predominate over residues 1976-1986; that stretch reads KSIQTPQSHGT. Residues Ser-1983 and Ser-2013 each carry the phosphoserine modification. Residues 2019-2035 are compositionally biased toward polar residues; sequence SVSAWNKPLTSFGSAPS. Residues 2075 to 2088 show a composition bias toward basic and acidic residues; the sequence is KSADKIPEPKEQRQ. Ser-2105 bears the Phosphoserine mark. Over residues 2108–2132 the composition is skewed to basic and acidic residues; it reads ENKEHKPGPIGKERSLKNRKVKDAQ. Position 2143 is a phosphoserine (Ser-2143). Positions 2257–2267 are enriched in basic and acidic residues; sequence WENSPNVREKG. Ser-2260 carries the post-translational modification Phosphoserine. Positions 2269–2290 are enriched in polar residues; the sequence is PVTSTAPPIATGVSSSASGPST. A compositionally biased stretch (low complexity) spans 2320 to 2334; that stretch reads TYTTSSLSTKSTTTS. Residues Thr-2673 and Thr-2682 each carry the phosphothreonine modification. Over residues 2679–2701 the composition is skewed to polar residues; that stretch reads RSTTPTSSPFRATSTSPNSQSSK. Ser-2686 and Ser-2694 each carry phosphoserine. Arg-2814 carries the omega-N-methylarginine modification. Arg-2823 is modified (asymmetric dimethylarginine; alternate). Residue Arg-2823 is modified to Omega-N-methylarginine; alternate. A compositionally biased stretch (polar residues) spans 2824–2833; that stretch reads FFSEQQQSKQ. The interval 2824 to 2896 is disordered; that stretch reads FFSEQQQSKQ…QAIKTEETKS (73 aa).

In terms of tissue distribution, overexpressed in bladder cancer.

It is found in the cytoplasm. Its subcellular location is the stress granule. Required for efficient formation of stress granules. The protein is Protein PRRC2C of Homo sapiens (Human).